Consider the following 795-residue polypeptide: Glycerol-3-phosphate acyltransferase 2, mitochondrial (795 aa).

The tract at residues 1-21 (MATMLEGRCQTQPRSSPSGRE) is disordered. The Cytoplasmic segment spans residues 1–305 (MATMLEGRCQ…LGPRLSALGQ (305 aa)). Polar residues predominate over residues 9 to 18 (CQTQPRSSPS). Positions 180 to 331 (QLHKGQMKMV…DALLVPVAVT (152 aa)) are acyltransferase. The short motif at 205–210 (HKTLLD) is the HXXXXD motif element. The helical transmembrane segment at 306-332 (AWVGFVVQAVQVGIVPDALLVPVAVTY) threads the bilayer. At 333 to 449 (DLVPDAPCDI…QLLVRRLSCH (117 aa)) the chain is on the mitochondrial intermembrane side. The chain crosses the membrane as a helical span at residues 450-472 (VLSASVGSSAVMSTAIMATLLLF). Residues 473-795 (KHQKLLGEFS…EQFIRQFICS (323 aa)) lie on the Cytoplasmic side of the membrane. A Phosphoserine modification is found at S656. Residue T660 is modified to Phosphothreonine. Phosphoserine occurs at positions 662 and 664.

It belongs to the GPAT/DAPAT family. Interacts with PIWIL2.

The protein resides in the mitochondrion outer membrane. The catalysed reaction is sn-glycerol 3-phosphate + an acyl-CoA = a 1-acyl-sn-glycero-3-phosphate + CoA. It carries out the reaction a 1-acyl-sn-glycero-3-phosphate + an acyl-CoA = a 1,2-diacyl-sn-glycero-3-phosphate + CoA. It catalyses the reaction 1-(9Z-octadecenoyl)-sn-glycero-3-phosphate + (9Z)-octadecenoyl-CoA = 1,2-di-(9Z-octadecenoyl)-sn-glycero-3-phosphate + CoA. The enzyme catalyses 1-(9Z-octadecenoyl)-sn-glycero-3-phosphate + (5Z,8Z,11Z,14Z)-eicosatetraenoyl-CoA = 1-(9Z)-octadecenoyl-2-(5Z,8Z,11Z,14Z)-eicosatetraenoyl-sn-glycero-3-phosphate + CoA. The catalysed reaction is (5Z,8Z,11Z,14Z)-eicosatetraenoyl-CoA + sn-glycerol 3-phosphate = 1-(5Z,8Z,11Z,14Z-eicosatetraenoyl)-sn-glycero-3-phosphate + CoA. The protein operates within phospholipid metabolism; CDP-diacylglycerol biosynthesis; CDP-diacylglycerol from sn-glycerol 3-phosphate: step 1/3. Inhibited by N-ethylmaleimide (NEM). In terms of biological role, transfers an acyl-group from acyl-ACP to the sn-1 position of glycerol-3-phosphate producing a lysophosphatidic acid (LPA), an essential step for the triacylglycerol (TAG) and glycerophospholipids. In vitro also transfers an acyl-group from acyl-ACP to the LPA producing a phosphatidic acid (PA). Prefers arachidonoyl-CoA as the acyl donor. Required for primary processing step during piRNA biosynthesis. Molecular mechanisms by which it promotes piRNA biosynthesis are unclear and do not involve its acyltransferase activity. The protein is Glycerol-3-phosphate acyltransferase 2, mitochondrial of Homo sapiens (Human).